Here is a 496-residue protein sequence, read N- to C-terminus: Glycerol kinase (496 aa).

T12 contributes to the ADP binding site. The ATP site is built by T12, T13, and S14. T12 lines the sn-glycerol 3-phosphate pocket. R16 provides a ligand contact to ADP. Sn-glycerol 3-phosphate is bound by residues R82, E83, and Y134. Glycerol-binding residues include R82, E83, and Y134. H230 carries the post-translational modification Phosphohistidine; by HPr. D244 serves as a coordination point for sn-glycerol 3-phosphate. 2 residues coordinate glycerol: D244 and Q245. T266 and G309 together coordinate ADP. The ATP site is built by T266, G309, Q313, and G410. ADP-binding residues include G410 and N414.

This sequence belongs to the FGGY kinase family. As to quaternary structure, homotetramer and homodimer (in equilibrium). The phosphoenolpyruvate-dependent sugar phosphotransferase system (PTS), including enzyme I, and histidine-containing protein (HPr) are required for the phosphorylation, which leads to the activation of the enzyme.

The catalysed reaction is glycerol + ATP = sn-glycerol 3-phosphate + ADP + H(+). It functions in the pathway polyol metabolism; glycerol degradation via glycerol kinase pathway; sn-glycerol 3-phosphate from glycerol: step 1/1. Its activity is regulated as follows. Activated by phosphorylation and inhibited by fructose 1,6-bisphosphate (FBP). Key enzyme in the regulation of glycerol uptake and metabolism. Catalyzes the phosphorylation of glycerol to yield sn-glycerol 3-phosphate. This Bacillus velezensis (strain DSM 23117 / BGSC 10A6 / LMG 26770 / FZB42) (Bacillus amyloliquefaciens subsp. plantarum) protein is Glycerol kinase.